A 151-amino-acid polypeptide reads, in one-letter code: Nucleoside diphosphate kinase (151 aa).

ATP-binding residues include Lys-11, Phe-59, Arg-87, Thr-93, Arg-104, and Asn-114. His-117 acts as the Pros-phosphohistidine intermediate in catalysis.

It belongs to the NDK family. As to quaternary structure, homotetramer. The cofactor is Mg(2+).

The protein localises to the cytoplasm. The catalysed reaction is a 2'-deoxyribonucleoside 5'-diphosphate + ATP = a 2'-deoxyribonucleoside 5'-triphosphate + ADP. It carries out the reaction a ribonucleoside 5'-diphosphate + ATP = a ribonucleoside 5'-triphosphate + ADP. Major role in the synthesis of nucleoside triphosphates other than ATP. The ATP gamma phosphate is transferred to the NDP beta phosphate via a ping-pong mechanism, using a phosphorylated active-site intermediate. This Prochlorococcus marinus (strain MIT 9211) protein is Nucleoside diphosphate kinase.